The chain runs to 405 residues: Phosphoglycerate kinase (405 aa).

Substrate-binding positions include 24-26 (DFN), Arg-40, 63-66 (HLGR), Arg-122, and Arg-162. ATP-binding positions include Lys-212, Glu-331, and 361–364 (GGDS).

This sequence belongs to the phosphoglycerate kinase family. Monomer.

The protein localises to the cytoplasm. It catalyses the reaction (2R)-3-phosphoglycerate + ATP = (2R)-3-phospho-glyceroyl phosphate + ADP. It functions in the pathway carbohydrate degradation; glycolysis; pyruvate from D-glyceraldehyde 3-phosphate: step 2/5. The chain is Phosphoglycerate kinase from Corynebacterium efficiens (strain DSM 44549 / YS-314 / AJ 12310 / JCM 11189 / NBRC 100395).